The chain runs to 75 residues: Putative sulfur carrier protein MJ0990 (75 aa).

Catalysis depends on Cys-15, which acts as the Cysteine persulfide intermediate.

The protein belongs to the sulfur carrier protein TusA family.

The chain is Putative sulfur carrier protein MJ0990 from Methanocaldococcus jannaschii (strain ATCC 43067 / DSM 2661 / JAL-1 / JCM 10045 / NBRC 100440) (Methanococcus jannaschii).